The primary structure comprises 372 residues: Hydrogenase-1 small chain (372 aa).

The tat-type signal signal peptide spans 1 to 45 (MNNEETFYQAMRRQGVTRRSFLKYCSLAATSLGLGAGMAPKIAWA). The Periplasmic segment spans residues 46–325 (LENKPRIPVV…PQMGTHSTAD (280 aa)). Residues C62, C65, C160, C194, H232, C235, C260, and C266 each contribute to the [4Fe-4S] cluster site. Residues C275, C294, and C297 each coordinate [3Fe-4S] cluster. The helical transmembrane segment at 326 to 346 (TVGLTALGVVAAAVGVHAVAS) threads the bilayer. The tract at residues 346–372 (SSVDQRRRHNQQPTETEHQPGNEDKQA) is disordered. The Cytoplasmic portion of the chain corresponds to 347–372 (SVDQRRRHNQQPTETEHQPGNEDKQA). Positions 360 to 372 (ETEHQPGNEDKQA) are enriched in basic and acidic residues.

Belongs to the [NiFe]/[NiFeSe] hydrogenase small subunit family. In terms of assembly, heterodimer of a large and a small subunit. [4Fe-4S] cluster serves as cofactor. [3Fe-4S] cluster is required as a cofactor. Predicted to be exported by the Tat system. The position of the signal peptide cleavage has not been experimentally proven.

The protein localises to the cell inner membrane. The catalysed reaction is H2 + A = AH2. Functionally, this is one of three S.flexneri hydrogenases synthesized in response to different physiological conditions. HYD1 is believed to have a role in hydrogen cycling during fermentative growth. The sequence is that of Hydrogenase-1 small chain (hyaA) from Shigella flexneri.